Reading from the N-terminus, the 306-residue chain is tRNA dimethylallyltransferase (306 aa).

12 to 19 (GPTAAGKT) serves as a coordination point for ATP. 14 to 19 (TAAGKT) is a substrate binding site. Interaction with substrate tRNA regions lie at residues 37–40 (DSAL), 161–165 (QRINR), and 242–247 (RCVGYR).

Belongs to the IPP transferase family. As to quaternary structure, monomer. Mg(2+) serves as cofactor.

The enzyme catalyses adenosine(37) in tRNA + dimethylallyl diphosphate = N(6)-dimethylallyladenosine(37) in tRNA + diphosphate. In terms of biological role, catalyzes the transfer of a dimethylallyl group onto the adenine at position 37 in tRNAs that read codons beginning with uridine, leading to the formation of N6-(dimethylallyl)adenosine (i(6)A). This is tRNA dimethylallyltransferase from Pseudoalteromonas translucida (strain TAC 125).